Reading from the N-terminus, the 1306-residue chain is Signaling mucin MSB2 (1306 aa).

The N-terminal stretch at 1 to 21 (MQFPFACLLSTLVISGSLARA) is a signal peptide. Residues 22–1185 (SPFDFIFGNG…VSTSSKSKKK (1164 aa)) lie on the Extracellular side of the membrane. Asparagine 30 carries N-linked (GlcNAc...) asparagine glycosylation. Disordered stretches follow at residues 248 to 267 (SADF…LSAA), 519 to 539 (QAGG…SSST), 561 to 580 (YMAG…LSES), 665 to 685 (SSIS…SASS), and 709 to 849 (TSSS…SVSQ). Polar residues predominate over residues 519 to 528 (QAGGSSMTNP). Positions 529-539 (SSSTIVYSSST) are enriched in low complexity. Low complexity-rich tracts occupy residues 665-674 (SSISSEFSPS) and 709-831 (TSSS…TSSQ). Tandem repeats lie at residues 698–714 (SQVS…SSSV), 715–731 (SQVS…SSSV), 732–748 (SQVS…SSSV), 749–765 (SQVS…SSSV), 766–782 (SQVS…SSSV), 783–799 (SQVS…RSSV), and 800–816 (SQVS…RSSV). Residues 698–816 (SQVSDTSVSY…VPSTSSRSSV (119 aa)) form a 7 X 17 AA tandem repeats region. N-linked (GlcNAc...) asparagine glycans are attached at residues asparagine 859, asparagine 885, asparagine 945, asparagine 1049, and asparagine 1088. The disordered stretch occupies residues 1123-1158 (SNSGGSSDGSSSSNSNSGSSGSGSNSNSGVSSSSGN). The N-linked (GlcNAc...) asparagine glycan is linked to asparagine 1175. A helical membrane pass occupies residues 1186–1206 (IIGLVIGVVVGGCLYILFMIF). Residues 1207–1306 (AFKYIIRRRI…SQNSLGWNEV (100 aa)) are Cytoplasmic-facing. The tract at residues 1272–1291 (LTNNDSTPTRHNTSSSIPKI) is disordered. Residue serine 1300 is modified to Phosphoserine.

This sequence belongs to the HKR1/MSB2 family. In terms of assembly, interacts with CDC42 and SHO1. Post-translationally, O-glycosylated in the Ser/Thr-rich regions.

Its subcellular location is the cell membrane. Its function is as follows. Plasma membrane signaling mucin that promotes activation of the MAPK for the filamentous growth pathway. Partially redundant with the SHO1 osmosensing branch for the activation of STE11. The chain is Signaling mucin MSB2 (MSB2) from Saccharomyces cerevisiae (strain ATCC 204508 / S288c) (Baker's yeast).